A 150-amino-acid polypeptide reads, in one-letter code: D-aminoacyl-tRNA deacylase (150 aa).

A Gly-cisPro motif, important for rejection of L-amino acids motif is present at residues 137–138; the sequence is GP.

It belongs to the DTD family. In terms of assembly, homodimer.

Its subcellular location is the cytoplasm. The catalysed reaction is glycyl-tRNA(Ala) + H2O = tRNA(Ala) + glycine + H(+). The enzyme catalyses a D-aminoacyl-tRNA + H2O = a tRNA + a D-alpha-amino acid + H(+). An aminoacyl-tRNA editing enzyme that deacylates mischarged D-aminoacyl-tRNAs. Also deacylates mischarged glycyl-tRNA(Ala), protecting cells against glycine mischarging by AlaRS. Acts via tRNA-based rather than protein-based catalysis; rejects L-amino acids rather than detecting D-amino acids in the active site. By recycling D-aminoacyl-tRNA to D-amino acids and free tRNA molecules, this enzyme counteracts the toxicity associated with the formation of D-aminoacyl-tRNA entities in vivo and helps enforce protein L-homochirality. The protein is D-aminoacyl-tRNA deacylase of Alkalilimnicola ehrlichii (strain ATCC BAA-1101 / DSM 17681 / MLHE-1).